Reading from the N-terminus, the 184-residue chain is Protein GrpE (184 aa).

The disordered stretch occupies residues 1-26 (MTAPQEPVDSTPESGENAATPGLEDD).

This sequence belongs to the GrpE family. As to quaternary structure, homodimer.

It is found in the cytoplasm. Its function is as follows. Participates actively in the response to hyperosmotic and heat shock by preventing the aggregation of stress-denatured proteins, in association with DnaK and GrpE. It is the nucleotide exchange factor for DnaK and may function as a thermosensor. Unfolded proteins bind initially to DnaJ; upon interaction with the DnaJ-bound protein, DnaK hydrolyzes its bound ATP, resulting in the formation of a stable complex. GrpE releases ADP from DnaK; ATP binding to DnaK triggers the release of the substrate protein, thus completing the reaction cycle. Several rounds of ATP-dependent interactions between DnaJ, DnaK and GrpE are required for fully efficient folding. The polypeptide is Protein GrpE (Bordetella bronchiseptica (strain ATCC BAA-588 / NCTC 13252 / RB50) (Alcaligenes bronchisepticus)).